Reading from the N-terminus, the 301-residue chain is UDP-N-acetylenolpyruvoylglucosamine reductase (301 aa).

The region spanning 30–194 (VGGEADYLVF…LSVKFALAPG (165 aa)) is the FAD-binding PCMH-type domain. Arginine 173 is an active-site residue. Serine 223 serves as the catalytic Proton donor. Residue glutamate 293 is part of the active site.

Belongs to the MurB family. FAD serves as cofactor.

Its subcellular location is the cytoplasm. The enzyme catalyses UDP-N-acetyl-alpha-D-muramate + NADP(+) = UDP-N-acetyl-3-O-(1-carboxyvinyl)-alpha-D-glucosamine + NADPH + H(+). It participates in cell wall biogenesis; peptidoglycan biosynthesis. Cell wall formation. The sequence is that of UDP-N-acetylenolpyruvoylglucosamine reductase from Streptococcus pneumoniae (strain JJA).